The primary structure comprises 455 residues: Growth/differentiation factor 6 (455 aa).

The N-terminal stretch at Met-1 to Gly-22 is a signal peptide. A propeptide spanning residues Phe-23–Arg-335 is cleaved from the precursor. The segment at Ser-29–Val-93 is disordered. Basic and acidic residues predominate over residues Ser-45–Arg-76. The segment covering Ala-77–Arg-91 has biased composition (low complexity). N-linked (GlcNAc...) asparagine glycosylation occurs at Asn-114. Disordered regions lie at residues Glu-244 to Arg-267 and Ala-300 to Arg-351. Basic residues predominate over residues Gly-330–Arg-351. 3 disulfides stabilise this stretch: Cys-354/Cys-420, Cys-383/Cys-452, and Cys-387/Cys-454.

Belongs to the TGF-beta family. Homodimer; disulfide-linked.

The protein resides in the secreted. Functionally, growth factor that controls proliferation and cellular differentiation in the retina and bone formation. Plays a key role in regulating apoptosis during retinal development. Establishes dorsal-ventral positional information in the retina and controls the formation of the retinotectal map. Required for normal formation of bones and joints in the limbs, skull, digits and axial skeleton. Plays a key role in establishing boundaries between skeletal elements during development. Regulation of GDF6 expression seems to be a mechanism for evolving species-specific changes in skeletal structures. Seems to positively regulate differentiation of chondrogenic tissue through the growth factor receptors subunits BMPR1A, BMPR1B, BMPR2 and ACVR2A, leading to the activation of SMAD1-SMAD5-SMAD8 complex. The regulation of chondrogenic differentiation is inhibited by NOG. Also involved in the induction of adipogenesis from mesenchymal stem cells. This mechanism acts through the growth factor receptors subunits BMPR1A, BMPR2 and ACVR2A and the activation of SMAD1-SMAD5-SMAD8 complex and MAPK14/p38. In Homo sapiens (Human), this protein is Growth/differentiation factor 6 (GDF6).